The primary structure comprises 428 residues: MKIYKLQTPVNAILENIAADKSISHRFAIFSLLTQEENKAQNYLLAQDTLNTLEIIKNLGAKIEQKDSCVKIIPPKEILSPNCILDCGNSGTAMRLMIGFLAGISGFFVLSGDKYLNNRPMRRISKPLTQIGARIYGRNEANLAPLCIEGQNLKAFNYKSEISSAQVKTAMILSAFRANNVCAFSEISLSRNHSENMLKAMKAPIRVSNDGLSLEISPLKKPLKAQNIIIPNDPSSAFYFALAAIILPKSQIILKNILLNPTRIEAYKILQKMGAKLEMTITQNDFETIGEIRVESSKLNGIEVKDNIAWLIDEAPALAIAFALAKGKSSLINAKELRVKESDRIAVMVENLKLCGVEARELDDGFEIEGGCELKSSKIKSYGDHRIAMSFAILGLLCGIEIDDSDCIKTSFPNFIEILSNLGARIDY.

3-phosphoshikimate contacts are provided by Lys-21, Ser-22, and Arg-26. Lys-21 contributes to the phosphoenolpyruvate binding site. The phosphoenolpyruvate site is built by Gly-91 and Arg-119. The 3-phosphoshikimate site is built by Ser-164, Gln-166, Asp-313, and Lys-340. Phosphoenolpyruvate is bound at residue Gln-166. Residue Asp-313 is the Proton acceptor of the active site. Arg-344 and Arg-386 together coordinate phosphoenolpyruvate.

It belongs to the EPSP synthase family. Monomer.

It is found in the cytoplasm. It catalyses the reaction 3-phosphoshikimate + phosphoenolpyruvate = 5-O-(1-carboxyvinyl)-3-phosphoshikimate + phosphate. It participates in metabolic intermediate biosynthesis; chorismate biosynthesis; chorismate from D-erythrose 4-phosphate and phosphoenolpyruvate: step 6/7. In terms of biological role, catalyzes the transfer of the enolpyruvyl moiety of phosphoenolpyruvate (PEP) to the 5-hydroxyl of shikimate-3-phosphate (S3P) to produce enolpyruvyl shikimate-3-phosphate and inorganic phosphate. The sequence is that of 3-phosphoshikimate 1-carboxyvinyltransferase from Campylobacter jejuni subsp. jejuni serotype O:6 (strain 81116 / NCTC 11828).